The sequence spans 218 residues: Dehydration-responsive element-binding protein 1B (218 aa).

The disordered stretch occupies residues 1-26 (MEVEEAAYRTVWSEPPKRPAGRTKFR). The segment at residues 32–95 (VYRGVRRRGG…RGRAACLNFA (64 aa)) is a DNA-binding region (AP2/ERF). The disordered stretch occupies residues 131–151 (SAAPSSPAETFADDGDEEEDN). Residues 141–151 (FADDGDEEEDN) are compositionally biased toward acidic residues.

Belongs to the AP2/ERF transcription factor family. ERF subfamily.

The protein localises to the nucleus. Its function is as follows. Transcriptional activator that binds specifically to the DNA sequence 5'-[AG]CCGAC-3'. Binding to the C-repeat/DRE element mediates high salinity- and dehydration-inducible transcription. Confers resistance to high salt, cold and drought stress. This Oryza sativa subsp. indica (Rice) protein is Dehydration-responsive element-binding protein 1B (DREB1B).